The chain runs to 752 residues: Xanthine dehydrogenase molybdenum-binding subunit (752 aa).

Gln-206, Phe-237, Arg-350, and Ala-516 together coordinate Mo-molybdopterin.

This sequence belongs to the xanthine dehydrogenase family. In terms of assembly, heterotrimer of XdhA, XdhB and XdhC. Requires Mo-molybdopterin as cofactor.

The catalysed reaction is xanthine + NAD(+) + H2O = urate + NADH + H(+). The enzyme catalyses hypoxanthine + NAD(+) + H2O = xanthine + NADH + H(+). Its pathway is purine metabolism; hypoxanthine degradation; urate from hypoxanthine: step 1/2. It functions in the pathway purine metabolism; hypoxanthine degradation; urate from hypoxanthine: step 2/2. Presumed to be a dehydrogenase, but possibly an oxidase. Participates in limited purine salvage (requires aspartate) but does not support aerobic growth on purines as the sole carbon source (purine catabolism). The protein is Xanthine dehydrogenase molybdenum-binding subunit (xdhA) of Escherichia coli O157:H7.